Consider the following 158-residue polypeptide: Kalata-B3/B6 (158 aa).

Positions 1-22 (MAKFTKSLVLCLLLAAFVGAFG) are cleaved as a signal peptide. The propeptide occupies 23–66 (AELSEADKANVVNEIAANIQREILKGVKSSETTLTMFLKEMQLK). Residues 67-96 (GLPTCGETCFGGTCNTPGCSCSSWPICTRN) constitute a cross-link (cyclopeptide (Gly-Asn)). 3 disulfide bridges follow: cysteine 71–cysteine 85, cysteine 75–cysteine 87, and cysteine 80–cysteine 93. Positions 97–121 (GLPKRAGVKSSETTLTMFLKEMQLK) are excised as a propeptide. A cross-link (cyclopeptide (Gly-Asp)) is located at residues 122–151 (GLPTCGETCFGGTCNTPGCTCDPWPICTRD). 3 disulfide bridges follow: cysteine 126–cysteine 140, cysteine 130–cysteine 142, and cysteine 135–cysteine 148. Residues 152 to 158 (GLPSAAA) constitute a propeptide that is removed on maturation.

It belongs to the cyclotide family. Moebius subfamily. Post-translationally, kalata-B3 and kalata-B6 are cyclic peptides.

Probably participates in a plant defense mechanism. Has hemolytic activity. This is Kalata-B3/B6 (OAK2) from Oldenlandia affinis.